Here is a 361-residue protein sequence, read N- to C-terminus: Chorismate synthase (361 aa).

Residues R48 and R54 each coordinate NADP(+). FMN contacts are provided by residues 125-127, 238-239, G278, 293-297, and R319; these read RSS, NA, and KPTSS.

It belongs to the chorismate synthase family. As to quaternary structure, homotetramer. FMNH2 is required as a cofactor.

The catalysed reaction is 5-O-(1-carboxyvinyl)-3-phosphoshikimate = chorismate + phosphate. Its pathway is metabolic intermediate biosynthesis; chorismate biosynthesis; chorismate from D-erythrose 4-phosphate and phosphoenolpyruvate: step 7/7. In terms of biological role, catalyzes the anti-1,4-elimination of the C-3 phosphate and the C-6 proR hydrogen from 5-enolpyruvylshikimate-3-phosphate (EPSP) to yield chorismate, which is the branch point compound that serves as the starting substrate for the three terminal pathways of aromatic amino acid biosynthesis. This reaction introduces a second double bond into the aromatic ring system. The sequence is that of Chorismate synthase from Salmonella choleraesuis (strain SC-B67).